The primary structure comprises 101 residues: Pore-forming peptide amoebapore C (101 aa).

The first 24 residues, M1–E24, serve as a signal peptide directing secretion. In terms of domain architecture, Saposin B-type spans I25 to C101. Disulfide bonds link C29–C101, C32–C95, and C59–C70.

As to quaternary structure, monomer. Homodimer. Hexamer; formed during insertion in the membrane.

The protein resides in the cytoplasmic granule. Its function is as follows. Forms pores in the cell membrane of host cells. Has antibacterial activity against M.luteus, no activity against E.coli. Implicated in the cytolytic activity of the parasite. This chain is Pore-forming peptide amoebapore C, found in Entamoeba histolytica (strain ATCC 30459 / HM-1:IMSS / ABRM).